A 950-amino-acid chain; its full sequence is Glycine dehydrogenase (decarboxylating) 1 (950 aa).

N6-(pyridoxal phosphate)lysine is present on K704.

Belongs to the GcvP family. As to quaternary structure, the glycine cleavage system is composed of four proteins: P, T, L and H. Pyridoxal 5'-phosphate serves as cofactor.

It catalyses the reaction N(6)-[(R)-lipoyl]-L-lysyl-[glycine-cleavage complex H protein] + glycine + H(+) = N(6)-[(R)-S(8)-aminomethyldihydrolipoyl]-L-lysyl-[glycine-cleavage complex H protein] + CO2. Functionally, the glycine cleavage system catalyzes the degradation of glycine. The P protein binds the alpha-amino group of glycine through its pyridoxal phosphate cofactor; CO(2) is released and the remaining methylamine moiety is then transferred to the lipoamide cofactor of the H protein. The protein is Glycine dehydrogenase (decarboxylating) 1 of Pseudomonas fluorescens (strain Pf0-1).